A 556-amino-acid polypeptide reads, in one-letter code: 2-isopropylmalate synthase (556 aa).

Positions 33 to 307 (PIWCSSDLRD…DPELDFSDID (275 aa)) constitute a Pyruvate carboxyltransferase domain. Positions 42, 246, 248, and 282 each coordinate Mg(2+). The interval 439–556 (ANTPYALISH…SLSQTQAKAA (118 aa)) is regulatory domain.

Belongs to the alpha-IPM synthase/homocitrate synthase family. LeuA type 2 subfamily. Homodimer. It depends on Mg(2+) as a cofactor.

Its subcellular location is the cytoplasm. The catalysed reaction is 3-methyl-2-oxobutanoate + acetyl-CoA + H2O = (2S)-2-isopropylmalate + CoA + H(+). It participates in amino-acid biosynthesis; L-leucine biosynthesis; L-leucine from 3-methyl-2-oxobutanoate: step 1/4. Functionally, catalyzes the condensation of the acetyl group of acetyl-CoA with 3-methyl-2-oxobutanoate (2-ketoisovalerate) to form 3-carboxy-3-hydroxy-4-methylpentanoate (2-isopropylmalate). This is 2-isopropylmalate synthase from Pseudomonas savastanoi pv. phaseolicola (strain 1448A / Race 6) (Pseudomonas syringae pv. phaseolicola (strain 1448A / Race 6)).